The primary structure comprises 400 residues: F-box/LRR-repeat protein 14 (400 aa).

Residues 2-48 enclose the F-box domain; sequence ETHISCLFPELLAMIFGYLDVRDKGRAAQVCTAWRDAAYHKSVWRGV. Residues 2–48 form a required for down-regulation of SNAI1 region; sequence ETHISCLFPELLAMIFGYLDVRDKGRAAQVCTAWRDAAYHKSVWRGV. LRR repeat units lie at residues 144–163, 170–191, 203–225, 229–250, and 254–275; these read GLEV…GLLL, RLKS…GHLA, GLEQ…HISR, GLRL…LHLS, and SLRS…MHLA.

In terms of assembly, part of a SCF (SKP1-cullin-F-box) ubiquitin-protein ligase complex. Interacts with SKP1 and CUL1. Interacts with SNAI1; the interaction requires the phosphorylation of the two serine residues in the substrate destruction motif D-S-G-X(2,3,4)-S.

The protein resides in the cytoplasm. Its function is as follows. Substrate-recognition component of some SCF (SKP1-CUL1-F-box protein)-type E3 ubiquitin-protein ligase complexes. The SCF(FBXL14) complex acts by mediating ubiquitination and subsequent degradation of SNAI1. In Bos taurus (Bovine), this protein is F-box/LRR-repeat protein 14 (FBXL14).